The primary structure comprises 441 residues: Queuine tRNA-ribosyltransferase accessory subunit 2 (441 aa).

C307, C309, C312, and H338 together coordinate Zn(2+).

It belongs to the queuine tRNA-ribosyltransferase family. QTRT2 subfamily. As to quaternary structure, heterodimer of a catalytic subunit and an accessory subunit. The cofactor is Zn(2+).

Its subcellular location is the cytoplasm. Non-catalytic subunit of the queuine tRNA-ribosyltransferase (TGT) that catalyzes the base-exchange of a guanine (G) residue with queuine (Q) at position 34 (anticodon wobble position) in tRNAs with GU(N) anticodons (tRNA-Asp, -Asn, -His and -Tyr), resulting in the hypermodified nucleoside queuosine (7-(((4,5-cis-dihydroxy-2-cyclopenten-1-yl)amino)methyl)-7-deazaguanosine). In Schizosaccharomyces pombe (strain 972 / ATCC 24843) (Fission yeast), this protein is Queuine tRNA-ribosyltransferase accessory subunit 2 (qtr2).